The primary structure comprises 389 residues: 1-acyl-sn-glycerol-3-phosphate acyltransferase 2 (389 aa).

Residues 2–22 form a helical membrane-spanning segment; it reads VIAAAVIVPLGLLFFISGLAV. The short motif at 91–96 is the HXXXXD motif element; it reads HRSDID. A run of 2 helical transmembrane segments spans residues 305–325 and 333–353; these read LAVV…FLHW and KGIT…QILI. Positions 357–389 are disordered; it reads QSERSTPAKVVPAKPKDNHHPESSSQTETEKEK. A compositionally biased stretch (basic and acidic residues) spans 370 to 389; the sequence is KPKDNHHPESSSQTETEKEK.

It belongs to the 1-acyl-sn-glycerol-3-phosphate acyltransferase family. Interacts with GPAT9 and DGAT1. In terms of tissue distribution, present in roots, leaves, stems, floral buds and siliques (at protein level). Widely expressed. In contrast to LPAT1, it is not expressed at higher level in leaves.

The protein resides in the endoplasmic reticulum membrane. The catalysed reaction is a 1-acyl-sn-glycero-3-phosphate + an acyl-CoA = a 1,2-diacyl-sn-glycero-3-phosphate + CoA. Its pathway is phospholipid metabolism; CDP-diacylglycerol biosynthesis; CDP-diacylglycerol from sn-glycerol 3-phosphate: step 2/3. Its function is as follows. Converts lysophosphatidic acid (LPA) into phosphatidic acid by incorporating acyl moiety at the 2 position. Has preference for C-18-CoA substrates compared to C-16-CoA substrates. Required for female but not male gametophyte development. This chain is 1-acyl-sn-glycerol-3-phosphate acyltransferase 2 (LPAT2), found in Arabidopsis thaliana (Mouse-ear cress).